Reading from the N-terminus, the 238-residue chain is 1-(5-phosphoribosyl)-5-[(5-phosphoribosylamino)methylideneamino] imidazole-4-carboxamide isomerase (238 aa).

The active-site Proton acceptor is Asp8. The Proton donor role is filled by Asp127.

Belongs to the HisA/HisF family.

Its subcellular location is the cytoplasm. It carries out the reaction 1-(5-phospho-beta-D-ribosyl)-5-[(5-phospho-beta-D-ribosylamino)methylideneamino]imidazole-4-carboxamide = 5-[(5-phospho-1-deoxy-D-ribulos-1-ylimino)methylamino]-1-(5-phospho-beta-D-ribosyl)imidazole-4-carboxamide. It participates in amino-acid biosynthesis; L-histidine biosynthesis; L-histidine from 5-phospho-alpha-D-ribose 1-diphosphate: step 4/9. The chain is 1-(5-phosphoribosyl)-5-[(5-phosphoribosylamino)methylideneamino] imidazole-4-carboxamide isomerase from Nitratiruptor sp. (strain SB155-2).